The sequence spans 1791 residues: Protein TIC 214 (1791 aa).

The next 6 membrane-spanning stretches (helical) occupy residues Ile19–Gly39, Phe68–Leu88, Pro91–His111, Val133–Leu153, Val176–Ile196, and Ile227–Ile247. Positions Ala1492–Leu1511 are disordered. Over residues Glu1498–Leu1511 the composition is skewed to basic and acidic residues.

This sequence belongs to the TIC214 family. In terms of assembly, part of the Tic complex.

The protein resides in the plastid. It is found in the chloroplast inner membrane. Its function is as follows. Involved in protein precursor import into chloroplasts. May be part of an intermediate translocation complex acting as a protein-conducting channel at the inner envelope. The protein is Protein TIC 214 of Barbarea verna (Land cress).